The following is a 128-amino-acid chain: Large ribosomal subunit protein bL12 (128 aa).

This sequence belongs to the bacterial ribosomal protein bL12 family. In terms of assembly, homodimer. Part of the ribosomal stalk of the 50S ribosomal subunit. Forms a multimeric L10(L12)X complex, where L10 forms an elongated spine to which 2 to 4 L12 dimers bind in a sequential fashion. Binds GTP-bound translation factors.

In terms of biological role, forms part of the ribosomal stalk which helps the ribosome interact with GTP-bound translation factors. Is thus essential for accurate translation. This chain is Large ribosomal subunit protein bL12, found in Petrotoga mobilis (strain DSM 10674 / SJ95).